A 295-amino-acid polypeptide reads, in one-letter code: Lectin 11 (295 aa).

Residues 1-22 are Cytoplasmic-facing; the sequence is MHYSHFYFIINNTNMTINAIPK. A helical membrane pass occupies residues 23-45; that stretch reads LFATKNSISLSIVIFMYLLILVA. Over 46-295 the chain is Extracellular; sequence NVKSDSSFNF…ILSWSFTSNM (250 aa). N-linked (GlcNAc...) asparagine glycosylation is present at Asn-152.

The protein belongs to the leguminous lectin family.

Its subcellular location is the membrane. In terms of biological role, may be involved in arbuscular mycorrhizal (AM) symbiosis with AM fungi. The protein is Lectin 11 of Medicago truncatula (Barrel medic).